The following is a 154-amino-acid chain: Lipoprotein signal peptidase (154 aa).

Transmembrane regions (helical) follow at residues glycine 55–isoleucine 75 and alanine 85–phenylalanine 105. Residues aspartate 111 and aspartate 129 contribute to the active site. Residues valine 127–alanine 147 form a helical membrane-spanning segment.

This sequence belongs to the peptidase A8 family.

It is found in the cell membrane. The catalysed reaction is Release of signal peptides from bacterial membrane prolipoproteins. Hydrolyzes -Xaa-Yaa-Zaa-|-(S,diacylglyceryl)Cys-, in which Xaa is hydrophobic (preferably Leu), and Yaa (Ala or Ser) and Zaa (Gly or Ala) have small, neutral side chains.. The protein operates within protein modification; lipoprotein biosynthesis (signal peptide cleavage). In terms of biological role, this protein specifically catalyzes the removal of signal peptides from prolipoproteins. In Geobacillus kaustophilus (strain HTA426), this protein is Lipoprotein signal peptidase.